The sequence spans 456 residues: Proline--tRNA ligase (456 aa).

Belongs to the class-II aminoacyl-tRNA synthetase family. ProS type 3 subfamily. Homodimer.

It localises to the cytoplasm. It catalyses the reaction tRNA(Pro) + L-proline + ATP = L-prolyl-tRNA(Pro) + AMP + diphosphate. In terms of biological role, catalyzes the attachment of proline to tRNA(Pro) in a two-step reaction: proline is first activated by ATP to form Pro-AMP and then transferred to the acceptor end of tRNA(Pro). The chain is Proline--tRNA ligase from Methanococcus aeolicus (strain ATCC BAA-1280 / DSM 17508 / OCM 812 / Nankai-3).